The chain runs to 192 residues: Xanthine phosphoribosyltransferase (192 aa).

Xanthine is bound by residues L20 and N27. 128-132 (ANGQA) contacts 5-phospho-alpha-D-ribose 1-diphosphate. K156 contacts xanthine.

It belongs to the purine/pyrimidine phosphoribosyltransferase family. Xpt subfamily. Homodimer.

The protein resides in the cytoplasm. The enzyme catalyses XMP + diphosphate = xanthine + 5-phospho-alpha-D-ribose 1-diphosphate. The protein operates within purine metabolism; XMP biosynthesis via salvage pathway; XMP from xanthine: step 1/1. Its function is as follows. Converts the preformed base xanthine, a product of nucleic acid breakdown, to xanthosine 5'-monophosphate (XMP), so it can be reused for RNA or DNA synthesis. The polypeptide is Xanthine phosphoribosyltransferase (Listeria innocua serovar 6a (strain ATCC BAA-680 / CLIP 11262)).